A 466-amino-acid polypeptide reads, in one-letter code: UDP-N-acetylmuramoylalanine--D-glutamate ligase (466 aa).

Position 121-127 (121-127) interacts with ATP; the sequence is GTNGKST.

It belongs to the MurCDEF family.

The protein resides in the cytoplasm. It catalyses the reaction UDP-N-acetyl-alpha-D-muramoyl-L-alanine + D-glutamate + ATP = UDP-N-acetyl-alpha-D-muramoyl-L-alanyl-D-glutamate + ADP + phosphate + H(+). The protein operates within cell wall biogenesis; peptidoglycan biosynthesis. Its function is as follows. Cell wall formation. Catalyzes the addition of glutamate to the nucleotide precursor UDP-N-acetylmuramoyl-L-alanine (UMA). This is UDP-N-acetylmuramoylalanine--D-glutamate ligase from Nitrobacter winogradskyi (strain ATCC 25391 / DSM 10237 / CIP 104748 / NCIMB 11846 / Nb-255).